The sequence spans 276 residues: NAD kinase (276 aa).

D66 serves as the catalytic Proton acceptor. Residues 66-67, 139-140, D168, 179-184, and Q234 contribute to the NAD(+) site; these read DG, ND, and TAYNIS.

The protein belongs to the NAD kinase family. Requires a divalent metal cation as cofactor.

The protein localises to the cytoplasm. It catalyses the reaction NAD(+) + ATP = ADP + NADP(+) + H(+). Functionally, involved in the regulation of the intracellular balance of NAD and NADP, and is a key enzyme in the biosynthesis of NADP. Catalyzes specifically the phosphorylation on 2'-hydroxyl of the adenosine moiety of NAD to yield NADP. In Campylobacter lari (strain RM2100 / D67 / ATCC BAA-1060), this protein is NAD kinase.